A 62-amino-acid chain; its full sequence is Large ribosomal subunit protein bL28 (62 aa).

Belongs to the bacterial ribosomal protein bL28 family.

The sequence is that of Large ribosomal subunit protein bL28 from Streptococcus mutans serotype c (strain ATCC 700610 / UA159).